The sequence spans 279 residues: MLSPANGEQIHLVNYVEDYLDSIESLPFDLQRNVSLMREIDAKYQEILKELDDYYEKFKRETDGTQKRRVLHCIQRALIRSQELGDEKIQIVSQMVELVENRSRQVDSHVELFEAHQDISDGTGGSGKAGQDKSKSEAITQADKPNNKRSRRQRNNENRENASNNHDHDDITSGTPKEKKAKTSKKKKRSKAKAEREASPADLPIDPNEPTYCLCNQVSYGEMIGCDNDECPIEWFHFSCVGLNHKPKGKWYCPKCRGESEKTMDKALEKSKKERAYNR.

A disordered region spans residues 115 to 206 (AHQDISDGTG…EASPADLPID (92 aa)). Lys135 participates in a covalent cross-link: Glycyl lysine isopeptide (Lys-Gly) (interchain with G-Cter in SUMO2). Residues 154-171 (RNNENRENASNNHDHDDI) show a composition bias toward basic and acidic residues. Positions 179–191 (KKAKTSKKKKRSK) are enriched in basic residues. The segment at 210–259 (PTYCLCNQVSYGEMIGCDNDECPIEWFHFSCVGLNHKPKGKWYCPKCRGE) adopts a PHD-type zinc-finger fold. Cys213, Cys215, Cys226, Cys231, His237, Cys240, Cys253, and Cys256 together coordinate Zn(2+). The segment at 262–279 (KTMDKALEKSKKERAYNR) is PBR.

It belongs to the ING family. In terms of assembly, interacts with H3K4me3 and to a lesser extent with H3K4me2. Isoform 2 interacts with RSL1D1. In terms of tissue distribution, in the adult, widely expressed with highest levels in thymus and testis.

It is found in the nucleus. Its function is as follows. Isoform 1 inhibits p53-dependent transcriptional activation and may function as an oncoprotein. Isoform 2 acts as a negative growth regulator by cooperating with p53 in transcriptional activation of p53-responsive genes and may act as a tumor suppressor. The protein is Inhibitor of growth protein 1 (Ing1) of Mus musculus (Mouse).